The following is a 594-amino-acid chain: (-)-endo-fenchol synthase, chloroplastic (594 aa).

The transit peptide at 1 to 50 (MSSLVMHVGIVNKPAITYLPTLSRSASNLHNVSSTRLQTSCSLQLDYKPV) directs the protein to the chloroplast. Mg(2+) is bound by residues Asp-348, Asp-352, Asp-492, and Glu-500. The DDXXD motif motif lies at 348-352 (DDIYD).

Belongs to the terpene synthase family. Tpsa subfamily. Requires Mg(2+) as cofactor. It depends on Mn(2+) as a cofactor. In terms of tissue distribution, expressed at high levels in leaves.

It is found in the plastid. The protein resides in the chloroplast. The enzyme catalyses (2E)-geranyl diphosphate = alpha-pinene + diphosphate. It catalyses the reaction (2E)-geranyl diphosphate + H2O = (1S,2S,4R)-endo-fenchol + diphosphate. The catalysed reaction is (2E)-geranyl diphosphate = limonene + diphosphate. Its pathway is secondary metabolite biosynthesis; terpenoid biosynthesis. Monoterpene synthase involved in the biosynthesis of volatile compounds widely used in aromatherapy and folk medicine, and present in culinary herbs. Mediates the conversion of (2E)-geranyl diphosphate (GPP) into alpha fenchol, limonene and alpha-pinene and, as minor compounds, into beta-myrcene, alpha-terpinolene and alpha-phellandrene. This is (-)-endo-fenchol synthase, chloroplastic from Lavandula pedunculata subsp. lusitanica (French lavender).